We begin with the raw amino-acid sequence, 243 residues long: DNA repair protein RecO (243 aa).

It belongs to the RecO family.

Functionally, involved in DNA repair and RecF pathway recombination. The chain is DNA repair protein RecO from Phenylobacterium zucineum (strain HLK1).